A 371-amino-acid polypeptide reads, in one-letter code: Partitioning defective 6 homolog beta (371 aa).

Serine 10 and serine 11 each carry phosphoserine. In terms of domain architecture, PB1 spans 16 to 96; it reads TMEVKSKFGA…PLLRIFIQKK (81 aa). The interval 126–253 is interaction with PARD3 and CDC42; that stretch reads RKKPHIVISM…ITVRPANQRN (128 aa). Residues 133–150 enclose the Pseudo-CRIB domain; it reads ISMPQDFRPVSSIIDVDI. The PDZ domain maps to 157–250; that stretch reads RVRLYKYGTE…NLIITVRPAN (94 aa). Disordered regions lie at residues 253–273 and 326–371; these read NNVVRNSRTSGSSSQSTDNSL and FESG…IITL. Residues 326 to 340 are compositionally biased toward polar residues; the sequence is FESGQNGFSPPQDTS. A compositionally biased stretch (basic and acidic residues) spans 352-363; it reads LESRAPDQKLLE.

Belongs to the PAR6 family. In terms of assembly, interacts with PARD3. Interacts with GTP-bound forms of CDC42, RHOQ/TC10 and RAC1. Interacts with the N-terminal part of PRKCI and PRKCZ. Part of a complex with PARD3, CDC42 or RAC1 and PRKCI or PRKCZ. Part of a complex with LLGL1 and PRKCI. Interacts with ALS2CR19. Interacts with ECT2. Interacts with PALS1. Expressed in pancreas and in both adult and fetal kidney. Weakly expressed in placenta and lung. Not expressed in other tissues.

Its subcellular location is the cytoplasm. It localises to the cell membrane. It is found in the cell junction. The protein localises to the tight junction. In terms of biological role, adapter protein involved in asymmetrical cell division and cell polarization processes. Probably involved in formation of epithelial tight junctions. Association with PARD3 may prevent the interaction of PARD3 with F11R/JAM1, thereby preventing tight junction assembly. The PARD6-PARD3 complex links GTP-bound Rho small GTPases to atypical protein kinase C proteins. The protein is Partitioning defective 6 homolog beta (Pard6b) of Mus musculus (Mouse).